The following is a 352-amino-acid chain: Ion-translocating oxidoreductase complex subunit D (352 aa).

5 helical membrane-spanning segments follow: residues isoleucine 20–glycine 40, glycine 42–leucine 62, proline 68–serine 88, isoleucine 89–alanine 109, and proline 123–leucine 143. FMN phosphoryl threonine is present on threonine 187. Helical transmembrane passes span glycine 217–isoleucine 237, isoleucine 244–proline 264, leucine 267–leucine 287, leucine 301–proline 321, and aspartate 322–threonine 342.

Belongs to the NqrB/RnfD family. The complex is composed of six subunits: RsxA, RsxB, RsxC, RsxD, RsxE and RsxG. The cofactor is FMN.

It is found in the cell inner membrane. Its function is as follows. Part of a membrane-bound complex that couples electron transfer with translocation of ions across the membrane. Required to maintain the reduced state of SoxR. The protein is Ion-translocating oxidoreductase complex subunit D of Escherichia fergusonii (strain ATCC 35469 / DSM 13698 / CCUG 18766 / IAM 14443 / JCM 21226 / LMG 7866 / NBRC 102419 / NCTC 12128 / CDC 0568-73).